Consider the following 250-residue polypeptide: MIIFPAVDIQNGKAVRLKQGRAHESTVFAESPVDAARAWEEAGARWLHVVDLDGAFDGAAQSRRIVRDICAALAIPVQLGGGIRDMHTAEAYLEAGVSRLIIGTLALEQPTLFADMCRAFPGRVGVSLDAEGGRLKSRGWVEDTGMTVDTALPRLLDDGAAFVIYTDIERDGMQCGVNVAALEHLARLSTVPVIAAGGVATLEDIQKLYPLTLETSLMGAVSGRALYEGTLDLKEANAWIDARKNTPESA.

Asp8 acts as the Proton acceptor in catalysis. Asp129 (proton donor) is an active-site residue.

It belongs to the HisA/HisF family.

Its subcellular location is the cytoplasm. It catalyses the reaction 1-(5-phospho-beta-D-ribosyl)-5-[(5-phospho-beta-D-ribosylamino)methylideneamino]imidazole-4-carboxamide = 5-[(5-phospho-1-deoxy-D-ribulos-1-ylimino)methylamino]-1-(5-phospho-beta-D-ribosyl)imidazole-4-carboxamide. The protein operates within amino-acid biosynthesis; L-histidine biosynthesis; L-histidine from 5-phospho-alpha-D-ribose 1-diphosphate: step 4/9. This is 1-(5-phosphoribosyl)-5-[(5-phosphoribosylamino)methylideneamino] imidazole-4-carboxamide isomerase from Desulfovibrio desulfuricans (strain ATCC 27774 / DSM 6949 / MB).